The primary structure comprises 258 residues: 5'-nucleotidase SurE (258 aa).

4 residues coordinate a divalent metal cation: D14, D15, S45, and N101.

The protein belongs to the SurE nucleotidase family. A divalent metal cation is required as a cofactor.

It localises to the cytoplasm. It carries out the reaction a ribonucleoside 5'-phosphate + H2O = a ribonucleoside + phosphate. In terms of biological role, nucleotidase that shows phosphatase activity on nucleoside 5'-monophosphates. This is 5'-nucleotidase SurE from Chlorobium limicola (strain DSM 245 / NBRC 103803 / 6330).